A 292-amino-acid chain; its full sequence is Probable endonuclease 4 (292 aa).

Residues His-70, His-111, Glu-146, Asp-180, His-183, His-215, Asp-228, His-230, and Glu-260 each contribute to the Zn(2+) site.

The protein belongs to the AP endonuclease 2 family. Zn(2+) is required as a cofactor.

It carries out the reaction Endonucleolytic cleavage to 5'-phosphooligonucleotide end-products.. Its function is as follows. Endonuclease IV plays a role in DNA repair. It cleaves phosphodiester bonds at apurinic or apyrimidinic (AP) sites, generating a 3'-hydroxyl group and a 5'-terminal sugar phosphate. The polypeptide is Probable endonuclease 4 (Shouchella clausii (strain KSM-K16) (Alkalihalobacillus clausii)).